A 180-amino-acid chain; its full sequence is ATP synthase subunit b 2 (180 aa).

The chain crosses the membrane as a helical span at residues 33–53 (IFWLLVTLVAIYFLLTRVALP).

Belongs to the ATPase B chain family. In terms of assembly, F-type ATPases have 2 components, F(1) - the catalytic core - and F(0) - the membrane proton channel. F(1) has five subunits: alpha(3), beta(3), gamma(1), delta(1), epsilon(1). F(0) has three main subunits: a(1), b(2) and c(10-14). The alpha and beta chains form an alternating ring which encloses part of the gamma chain. F(1) is attached to F(0) by a central stalk formed by the gamma and epsilon chains, while a peripheral stalk is formed by the delta and b chains.

The protein localises to the cell inner membrane. F(1)F(0) ATP synthase produces ATP from ADP in the presence of a proton or sodium gradient. F-type ATPases consist of two structural domains, F(1) containing the extramembraneous catalytic core and F(0) containing the membrane proton channel, linked together by a central stalk and a peripheral stalk. During catalysis, ATP synthesis in the catalytic domain of F(1) is coupled via a rotary mechanism of the central stalk subunits to proton translocation. Its function is as follows. Component of the F(0) channel, it forms part of the peripheral stalk, linking F(1) to F(0). The b'-subunit is a diverged and duplicated form of b found in plants and photosynthetic bacteria. The polypeptide is ATP synthase subunit b 2 (atpF2) (Cereibacter sphaeroides (strain ATCC 17025 / ATH 2.4.3) (Rhodobacter sphaeroides)).